A 270-amino-acid chain; its full sequence is Undecaprenyl-diphosphatase (270 aa).

The next 7 helical transmembrane spans lie at 3 to 23 (TIVT…LPVS), 42 to 62 (WAMF…VQYW), 86 to 106 (LLAA…YIDV), 108 to 128 (LGSP…ILVI), 184 to 204 (AEFS…LELL), 217 to 237 (VGWS…LAVI), and 249 to 269 (FKPF…WLAM).

This sequence belongs to the UppP family.

Its subcellular location is the cell inner membrane. It carries out the reaction di-trans,octa-cis-undecaprenyl diphosphate + H2O = di-trans,octa-cis-undecaprenyl phosphate + phosphate + H(+). In terms of biological role, catalyzes the dephosphorylation of undecaprenyl diphosphate (UPP). Confers resistance to bacitracin. The sequence is that of Undecaprenyl-diphosphatase from Novosphingobium aromaticivorans (strain ATCC 700278 / DSM 12444 / CCUG 56034 / CIP 105152 / NBRC 16084 / F199).